The primary structure comprises 59 residues: Large ribosomal subunit protein uL30 (59 aa).

This sequence belongs to the universal ribosomal protein uL30 family. Part of the 50S ribosomal subunit.

This Alkaliphilus oremlandii (strain OhILAs) (Clostridium oremlandii (strain OhILAs)) protein is Large ribosomal subunit protein uL30.